A 64-amino-acid polypeptide reads, in one-letter code: H/ACA ribonucleoprotein complex subunit 3-like protein (64 aa).

Belongs to the NOP10 family. As to quaternary structure, component of the small nucleolar ribonucleoprotein particles containing H/ACA-type snoRNAs (H/ACA snoRNPs).

It localises to the nucleus. The protein resides in the nucleolus. Its function is as follows. Required for ribosome biogenesis. Part of a complex which catalyzes pseudouridylation of rRNA. This involves the isomerization of uridine such that the ribose is subsequently attached to C5, instead of the normal N1. Pseudouridine ('psi') residues may serve to stabilize the conformation of rRNAs. This Arabidopsis thaliana (Mouse-ear cress) protein is H/ACA ribonucleoprotein complex subunit 3-like protein.